The sequence spans 572 residues: BOS complex subunit ncln (572 aa).

Positions Met-1–Ala-35 are cleaved as a signal peptide. The Extracellular segment spans residues Ala-36 to Ala-530. N-linked (GlcNAc...) asparagine glycans are attached at residues Asn-108, Asn-234, and Asn-436. A helical transmembrane segment spans residues Ile-531–Ile-551. Over Gln-552–His-572 the chain is Cytoplasmic.

The protein belongs to the nicastrin family. In terms of assembly, component of the multi-pass translocon (MPT) complex.

The protein resides in the endoplasmic reticulum membrane. Its function is as follows. Component of the multi-pass translocon (MPT) complex that mediates insertion of multi-pass membrane proteins into the lipid bilayer of membranes. The MPT complex takes over after the SEC61 complex: following membrane insertion of the first few transmembrane segments of proteins by the SEC61 complex, the MPT complex occludes the lateral gate of the SEC61 complex to promote insertion of subsequent transmembrane regions. Antagonizes Nodal signaling and subsequent organization of axial structures during mesodermal patterning. Ectopic expression results in cyclopia, due to a defect in mesendoderm patterning. The polypeptide is BOS complex subunit ncln (ncln) (Danio rerio (Zebrafish)).